The following is a 69-amino-acid chain: UPF0270 protein VCM66_2532 (69 aa).

This sequence belongs to the UPF0270 family.

The protein is UPF0270 protein VCM66_2532 of Vibrio cholerae serotype O1 (strain M66-2).